A 222-amino-acid polypeptide reads, in one-letter code: Pyridoxine/pyridoxamine 5'-phosphate oxidase (222 aa).

Substrate is bound by residues 14-17 and lysine 71; that span reads RRNY. FMN-binding positions include 66 to 71, 81 to 82, arginine 87, lysine 88, and glutamine 110; these read RTVLLK and FT. Residues tyrosine 128, arginine 132, and serine 136 each contribute to the substrate site. Residues 145-146 and tryptophan 190 contribute to the FMN site; that span reads QS. 196–198 serves as a coordination point for substrate; it reads RLN. FMN is bound at residue arginine 200.

Belongs to the pyridoxamine 5'-phosphate oxidase family. As to quaternary structure, homodimer. The cofactor is FMN.

The catalysed reaction is pyridoxamine 5'-phosphate + O2 + H2O = pyridoxal 5'-phosphate + H2O2 + NH4(+). The enzyme catalyses pyridoxine 5'-phosphate + O2 = pyridoxal 5'-phosphate + H2O2. It participates in cofactor metabolism; pyridoxal 5'-phosphate salvage; pyridoxal 5'-phosphate from pyridoxamine 5'-phosphate: step 1/1. The protein operates within cofactor metabolism; pyridoxal 5'-phosphate salvage; pyridoxal 5'-phosphate from pyridoxine 5'-phosphate: step 1/1. Functionally, catalyzes the oxidation of either pyridoxine 5'-phosphate (PNP) or pyridoxamine 5'-phosphate (PMP) into pyridoxal 5'-phosphate (PLP). The sequence is that of Pyridoxine/pyridoxamine 5'-phosphate oxidase from Prochlorococcus marinus (strain MIT 9303).